The chain runs to 580 residues: Probable glucomannan 4-beta-mannosyltransferase 2 (580 aa).

A compositionally biased stretch (polar residues) spans 1–12 (MSTNGGAPSQKR). Positions 1–33 (MSTNGGAPSQKRSWLPSRPLLTTTTQTYPPPLL) are disordered. Residues 15 to 27 (LPSRPLLTTTTQT) are compositionally biased toward low complexity. Residues 85–105 (AVWACLAMSAMLVAEAAWMGL) form a helical membrane-spanning segment. The active site involves Asp-182. Residues Asp-241 and Asp-243 each coordinate substrate. Asp-335 is an active-site residue. A run of 4 helical transmembrane segments spans residues 414-434 (AIAPILTFLFYCIVIPLSAMV), 437-457 (VTIPVWGLVYIPTAITIMNAI), 528-548 (IYIPELLLALYLLICASYDFV), and 554-574 (YYIYIYLQAVAFTVMGFGFVG).

It belongs to the glycosyltransferase 2 family. Plant cellulose synthase-like A subfamily.

The protein localises to the golgi apparatus membrane. The catalysed reaction is GDP-mannose + (glucomannan)n = GDP + (glucomannan)n+1.. Probable mannan synthase which consists of a 4-beta-mannosyltransferase activity on mannan using GDP-mannose. The beta-1,4-mannan product is the backbone for galactomannan synthesis by galactomannan galactosyltransferase. Galactomannan is a noncellulosic polysaccharides of plant cell wall. The polypeptide is Probable glucomannan 4-beta-mannosyltransferase 2 (Oryza sativa subsp. japonica (Rice)).